Reading from the N-terminus, the 319-residue chain is Acetyl-coenzyme A carboxylase carboxyl transferase subunit alpha (319 aa).

The region spanning 35–296 (DLDKEIEQLE…KATLLRQLAE (262 aa)) is the CoA carboxyltransferase C-terminal domain.

It belongs to the AccA family. Acetyl-CoA carboxylase is a heterohexamer composed of biotin carboxyl carrier protein (AccB), biotin carboxylase (AccC) and two subunits each of ACCase subunit alpha (AccA) and ACCase subunit beta (AccD).

It is found in the cytoplasm. It catalyses the reaction N(6)-carboxybiotinyl-L-lysyl-[protein] + acetyl-CoA = N(6)-biotinyl-L-lysyl-[protein] + malonyl-CoA. The protein operates within lipid metabolism; malonyl-CoA biosynthesis; malonyl-CoA from acetyl-CoA: step 1/1. Its function is as follows. Component of the acetyl coenzyme A carboxylase (ACC) complex. First, biotin carboxylase catalyzes the carboxylation of biotin on its carrier protein (BCCP) and then the CO(2) group is transferred by the carboxyltransferase to acetyl-CoA to form malonyl-CoA. The sequence is that of Acetyl-coenzyme A carboxylase carboxyl transferase subunit alpha from Vibrio vulnificus (strain CMCP6).